Consider the following 692-residue polypeptide: Tripartite terminase subunit 1 (692 aa).

A C3H1-type zinc finger spans residues 190–218; it reads CYLCYEELQMTPNNGSSVQKRLNGVLCEH. 634–641 contributes to the ATP binding site; it reads YNELYGQR.

This sequence belongs to the herpesviridae TRM1 protein family. As to quaternary structure, associates with TRM2 and TRM3 to form the tripartite terminase complex. Interacts with portal protein.

The protein localises to the host nucleus. In terms of biological role, component of the molecular motor that translocates viral genomic DNA in empty capsid during DNA packaging. Forms a tripartite terminase complex together with TRM2 and TRM3 in the host cytoplasm. Once the complex reaches the host nucleus, it interacts with the capsid portal vertex. This portal forms a ring in which genomic DNA is translocated into the capsid. TRM1 carries an endonuclease activity that plays an important role for the cleavage of concatemeric viral DNA into unit length genomes. This is Tripartite terminase subunit 1 from Elephas maximus (Indian elephant).